The chain runs to 407 residues: Inhibin beta B chain (407 aa).

Positions 1 to 28 (MDGLPGRALGAACLLLLAAGWLGPEAWG) are cleaved as a signal peptide. The disordered stretch occupies residues 26-62 (AWGSPTPPPTPAAPPPPPPPGSPGGSQDTCTSCGGFR). Residues 29-292 (SPTPPPTPAA…GDSRHRIRKR (264 aa)) constitute a propeptide that is removed on maturation. The segment covering 30-47 (PTPPPTPAAPPPPPPPGS) has biased composition (pro residues). N-linked (GlcNAc...) asparagine glycosylation is present at N93. Intrachain disulfides connect C296/C304, C303/C372, C332/C404, and C336/C406.

The protein belongs to the TGF-beta family. Dimeric, linked by one or more disulfide bonds. Inhibin B is a dimer of alpha and beta-B. Activin B is a homodimer of beta-B. Activin AB is a dimer of beta-A and beta-B. Interacts with FST and FSTL3. Activin B interacts with BMPR2.

The protein localises to the secreted. Its function is as follows. Inhibins and activins inhibit and activate, respectively, the secretion of follitropin by the pituitary gland. Inhibins/activins are involved in regulating a number of diverse functions such as hypothalamic and pituitary hormone secretion, gonadal hormone secretion, germ cell development and maturation, erythroid differentiation, insulin secretion, nerve cell survival, embryonic axial development or bone growth, depending on their subunit composition. Inhibins appear to oppose the functions of activins. Functionally, activin B is a dimer of alpha and beta-B that plays a role in several essential biological processes including embryonic development, stem cell maintenance and differentiation, haematopoiesis, cell proliferation and wound healing. Signals through type I receptor ACVR1C, abundantly expressed in pancreatic beta cells, and type II receptors like ACVR2A or BMPR2. Upon ligand binding, these receptors phosphorylate intracellular signaling mediators SMAD2 and SMAD3, which form a complex with SMAD4, translocate to the nucleus, and regulate gene expression. Plays a crucial role in the induction of hepcidin by inflammation through activation of ACVR1C and subsequent phosphorylation of SMAD1/5/8. Regulates adipocyte lipid metabolism by decreasing non-esterified fatty acids and glycerol release and increases intracellular triglyceride content. Stimulates wound healing by promoting cell migration and hair follicle regeneration through the JNK and ERK signaling pathways downstream of RHOA. In terms of biological role, inhibin B is a dimer of alpha and beta-B that plays a crucial role in the regulation of the reproductive system by inhibiting the secretion of follicle-stimulating hormone (FSH) from the anterior pituitary gland. Thereby, maintains reproductive homeostasis in both males and females. Acts as a more potent suppressor of FSH release than inhibin A. Functions as competitive receptor antagonist binding activin type II receptors with high affinity in the presence of the TGF-beta type III coreceptor/TGFBR3L. The protein is Inhibin beta B chain (INHBB) of Homo sapiens (Human).